A 713-amino-acid polypeptide reads, in one-letter code: BBSome complex assembly protein BBS10 (713 aa).

This sequence belongs to the TCP-1 chaperonin family. In terms of assembly, component of a complex composed at least of MKKS, BBS10, BBS12, TCP1, CCT2, CCT3, CCT4, CCT5 and CCT8.

It localises to the cell projection. The protein localises to the cilium. Its function is as follows. Probable molecular chaperone that assists the folding of proteins upon ATP hydrolysis. Plays a role in the assembly of BBSome, a complex involved in ciliogenesis regulating transports vesicles to the cilia. Involved in adipogenic differentiation. The polypeptide is BBSome complex assembly protein BBS10 (Bbs10) (Mus musculus (Mouse)).